The primary structure comprises 192 residues: NADH-quinone oxidoreductase subunit B (192 aa).

[4Fe-4S] cluster-binding residues include C71, C72, C136, and C166.

This sequence belongs to the complex I 20 kDa subunit family. As to quaternary structure, NDH-1 is composed of 14 different subunits. Subunits NuoB, C, D, E, F, and G constitute the peripheral sector of the complex. Requires [4Fe-4S] cluster as cofactor.

The protein localises to the cell inner membrane. It carries out the reaction a quinone + NADH + 5 H(+)(in) = a quinol + NAD(+) + 4 H(+)(out). Functionally, NDH-1 shuttles electrons from NADH, via FMN and iron-sulfur (Fe-S) centers, to quinones in the respiratory chain. Couples the redox reaction to proton translocation (for every two electrons transferred, four hydrogen ions are translocated across the cytoplasmic membrane), and thus conserves the redox energy in a proton gradient. This is NADH-quinone oxidoreductase subunit B from Azorhizobium caulinodans (strain ATCC 43989 / DSM 5975 / JCM 20966 / LMG 6465 / NBRC 14845 / NCIMB 13405 / ORS 571).